The following is a 248-amino-acid chain: 2,3-bisphosphoglycerate-dependent phosphoglycerate mutase (248 aa).

Residues 8-15 (RHGESTWN), 21-22 (TG), Arg-60, 87-90 (ERHY), Lys-98, 114-115 (RR), and 183-184 (GN) each bind substrate. His-9 acts as the Tele-phosphohistidine intermediate in catalysis. Glu-87 functions as the Proton donor/acceptor in the catalytic mechanism.

The protein belongs to the phosphoglycerate mutase family. BPG-dependent PGAM subfamily. Homodimer.

The enzyme catalyses (2R)-2-phosphoglycerate = (2R)-3-phosphoglycerate. It functions in the pathway carbohydrate degradation; glycolysis; pyruvate from D-glyceraldehyde 3-phosphate: step 3/5. Catalyzes the interconversion of 2-phosphoglycerate and 3-phosphoglycerate. This is 2,3-bisphosphoglycerate-dependent phosphoglycerate mutase from Burkholderia cenocepacia (strain ATCC BAA-245 / DSM 16553 / LMG 16656 / NCTC 13227 / J2315 / CF5610) (Burkholderia cepacia (strain J2315)).